Here is a 294-residue protein sequence, read N- to C-terminus: Homoserine kinase (294 aa).

Residue 84–94 (PFSRGLGSSSA) participates in ATP binding.

Belongs to the GHMP kinase family. Homoserine kinase subfamily.

Its subcellular location is the cytoplasm. It carries out the reaction L-homoserine + ATP = O-phospho-L-homoserine + ADP + H(+). The protein operates within amino-acid biosynthesis; L-threonine biosynthesis; L-threonine from L-aspartate: step 4/5. In terms of biological role, catalyzes the ATP-dependent phosphorylation of L-homoserine to L-homoserine phosphate. The protein is Homoserine kinase of Campylobacter concisus (strain 13826).